A 95-amino-acid chain; its full sequence is Large ribosomal subunit protein bL27 (95 aa).

Residues 1–6 (MFLQLF) constitute a propeptide that is removed on maturation.

Belongs to the bacterial ribosomal protein bL27 family. In terms of processing, the N-terminus is cleaved by ribosomal processing cysteine protease Prp.

This chain is Large ribosomal subunit protein bL27, found in Symbiobacterium thermophilum (strain DSM 24528 / JCM 14929 / IAM 14863 / T).